Consider the following 570-residue polypeptide: Sulfite reductase [NADPH] hemoprotein beta-component (570 aa).

4 residues coordinate [4Fe-4S] cluster: cysteine 434, cysteine 440, cysteine 479, and cysteine 483. Cysteine 483 is a binding site for siroheme.

The protein belongs to the nitrite and sulfite reductase 4Fe-4S domain family. Alpha(8)-beta(8). The alpha component is a flavoprotein, the beta component is a hemoprotein. Siroheme serves as cofactor. It depends on [4Fe-4S] cluster as a cofactor.

The enzyme catalyses hydrogen sulfide + 3 NADP(+) + 3 H2O = sulfite + 3 NADPH + 4 H(+). Its pathway is sulfur metabolism; hydrogen sulfide biosynthesis; hydrogen sulfide from sulfite (NADPH route): step 1/1. In terms of biological role, component of the sulfite reductase complex that catalyzes the 6-electron reduction of sulfite to sulfide. This is one of several activities required for the biosynthesis of L-cysteine from sulfate. This is Sulfite reductase [NADPH] hemoprotein beta-component from Salmonella newport (strain SL254).